We begin with the raw amino-acid sequence, 275 residues long: NH(3)-dependent NAD(+) synthetase (275 aa).

47–54 is an ATP binding site; it reads GISGGQDS. Asp53 serves as a coordination point for Mg(2+). Position 139 (Arg139) interacts with deamido-NAD(+). Thr159 serves as a coordination point for ATP. Glu164 is a Mg(2+) binding site. Deamido-NAD(+) is bound by residues Lys172 and Asp179. Residues Lys188 and Thr210 each coordinate ATP. 259 to 260 serves as a coordination point for deamido-NAD(+); that stretch reads HK.

It belongs to the NAD synthetase family. In terms of assembly, homodimer.

The catalysed reaction is deamido-NAD(+) + NH4(+) + ATP = AMP + diphosphate + NAD(+) + H(+). The protein operates within cofactor biosynthesis; NAD(+) biosynthesis; NAD(+) from deamido-NAD(+) (ammonia route): step 1/1. In terms of biological role, catalyzes the ATP-dependent amidation of deamido-NAD to form NAD. Uses ammonia as a nitrogen source. The polypeptide is NH(3)-dependent NAD(+) synthetase (Staphylococcus epidermidis (strain ATCC 35984 / DSM 28319 / BCRC 17069 / CCUG 31568 / BM 3577 / RP62A)).